Consider the following 178-residue polypeptide: Nucleoside-triphosphatase THEP1 (178 aa).

ATP contacts are provided by residues 9–16 and 101–108; these read GPVGSIKA and VIIIDEVG.

The protein belongs to the THEP1 NTPase family.

It catalyses the reaction a ribonucleoside 5'-triphosphate + H2O = a ribonucleoside 5'-diphosphate + phosphate + H(+). In terms of biological role, has nucleotide phosphatase activity towards ATP, GTP, CTP, TTP and UTP. May hydrolyze nucleoside diphosphates with lower efficiency. The protein is Nucleoside-triphosphatase THEP1 of Thermoplasma volcanium (strain ATCC 51530 / DSM 4299 / JCM 9571 / NBRC 15438 / GSS1).